The chain runs to 108 residues: Iron-sulfur cluster assembly protein CyaY (108 aa).

The protein belongs to the frataxin family.

In terms of biological role, involved in iron-sulfur (Fe-S) cluster assembly. May act as a regulator of Fe-S biogenesis. The polypeptide is Iron-sulfur cluster assembly protein CyaY (Burkholderia cenocepacia (strain ATCC BAA-245 / DSM 16553 / LMG 16656 / NCTC 13227 / J2315 / CF5610) (Burkholderia cepacia (strain J2315))).